Reading from the N-terminus, the 216-residue chain is uncharacterized protein (216 aa).

The next 4 helical transmembrane spans lie at 5-27 (ISLI…IAFS), 98-120 (FLSF…VFLL), 125-147 (VLIW…TFTN), and 185-207 (GTLF…GILG).

The protein localises to the cell membrane. This is an uncharacterized protein from Aquifex aeolicus (strain VF5).